A 41-amino-acid polypeptide reads, in one-letter code: MKVVSSLKSLKKRDKDCQIVKRRGKIFVINKKNKRFRAKQG.

The protein belongs to the bacterial ribosomal protein bL36 family.

This is Large ribosomal subunit protein bL36 from Rickettsia prowazekii (strain Madrid E).